Consider the following 330-residue polypeptide: Cyclic AMP receptor-like protein E (330 aa).

The Extracellular segment spans residues 1–10 (MLSLSSYVLN). A helical membrane pass occupies residues 11 to 31 (LVGSILCLIGCLFIIGHFFWI). The Cytoplasmic portion of the chain corresponds to 32 to 40 (PLLRTSLSR). A helical transmembrane segment spans residues 41–61 (IIIYPTFILLLYDMVSFPSFI). At 62–85 (SKTADLYIERSTIICNFQEAIIQY) the chain is on the extracellular side. Residues 86–106 (LILSNFIWSVCISVNLLYLCF) traverse the membrane as a helical segment. Residues 107–116 (SPNKNLKKNE) are Cytoplasmic-facing. Residues 117-137 (LLYHLCSWGIPLIVVVITKIP) traverse the membrane as a helical segment. Over 138–156 (NMISDNGNQCRFKSPNYIK) the chain is Extracellular. Residues 157–177 (FYLETILFIAFMLFNFIVAFI) traverse the membrane as a helical segment. At 178 to 213 (TIKHIISGNLRESETTTTSVLFVNEKKITTKKIVWR) the chain is on the cytoplasmic side. A helical transmembrane segment spans residues 214–234 (LLLYPSILSICYIMTLVLSIY). Topologically, residues 235 to 274 (QFSTESYGSGGAYANSINNKRNDKNTESGNSNNNNNSYIE) are extracellular. N-linked (GlcNAc...) asparagine glycosylation occurs at asparagine 269. Residues 275 to 295 (ILLYISKAIFLLQGFFNALVY) traverse the membrane as a helical segment. At 296-330 (LRSSKLRDRYKKITIFRKIFWRDEADYQSINDGFN) the chain is on the cytoplasmic side.

The protein belongs to the G-protein coupled receptor 5 family.

It localises to the membrane. Receptor for cAMP. The chain is Cyclic AMP receptor-like protein E (crlE) from Dictyostelium discoideum (Social amoeba).